A 60-amino-acid polypeptide reads, in one-letter code: Probable tautomerase SAG1079 (60 aa).

Proline 2 (proton acceptor; via imino nitrogen) is an active-site residue.

This sequence belongs to the 4-oxalocrotonate tautomerase family.

This Streptococcus agalactiae serotype V (strain ATCC BAA-611 / 2603 V/R) protein is Probable tautomerase SAG1079.